We begin with the raw amino-acid sequence, 381 residues long: 2-epi-5-epi-valiolone synthase (381 aa).

NAD(+) is bound by residues Asp50, 81 to 84, 114 to 118, 138 to 139, Lys151, Lys160, and 178 to 181; these read EEAK, GIVLD, TS, and FLDT. Residue Lys151 is part of the active site. A divalent metal cation contacts are provided by Glu193, His264, and His280.

This sequence belongs to the sugar phosphate cyclases superfamily. EEVS family. NAD(+) is required as a cofactor. It depends on Co(2+) as a cofactor.

The catalysed reaction is D-sedoheptulose 7-phosphate = 2-epi-5-epi-valiolone + phosphate. It functions in the pathway antibiotic biosynthesis. Catalyzes the cyclization of D-sedoheptulose 7-phosphate to 2-epi-5-epi-valiolone. Involved in cetoniacytone A biosynthesis. This chain is 2-epi-5-epi-valiolone synthase, found in Actinomyces sp.